The chain runs to 326 residues: Glutamine synthetase (326 aa).

Residues 4-85 (FKLEYIWLDG…VMCEVMMPDG (82 aa)) form the GS beta-grasp domain. The GS catalytic domain maps to 83-326 (PDGHAHASNA…GDPYQIVRRF (244 aa)). Mg(2+)-binding residues include Glu107 and Glu109. ATP is bound at residue Glu164. Mg(2+) contacts are provided by Glu169 and Glu176. Position 275 (Glu275) interacts with L-glutamate.

It belongs to the glutamine synthetase family. As to quaternary structure, homooctamer and homotetramer. Requires Mg(2+) as cofactor.

The protein localises to the cytoplasm. The catalysed reaction is L-glutamate + NH4(+) + ATP = L-glutamine + ADP + phosphate + H(+). Transferase activity is inhibited by NH(4)Cl. Its function is as follows. Catalyzes the ATP-dependent biosynthesis of glutamine from glutamate and ammonia. This chain is Glutamine synthetase, found in Rhizobium leguminosarum bv. phaseoli.